A 177-amino-acid polypeptide reads, in one-letter code: Nucleoside triphosphate/diphosphate phosphatase (177 aa).

Catalysis depends on Arg-23, which acts as the Proton donor. Residues Asn-87, Asp-103, Asp-105, Asp-107, Asp-120, and Glu-123 each contribute to the Mg(2+) site.

It belongs to the Ntdp family. Mg(2+) serves as cofactor.

It catalyses the reaction a ribonucleoside 5'-triphosphate + H2O = a ribonucleoside 5'-diphosphate + phosphate + H(+). It carries out the reaction a ribonucleoside 5'-diphosphate + H2O = a ribonucleoside 5'-phosphate + phosphate + H(+). Has nucleoside phosphatase activity towards nucleoside triphosphates and nucleoside diphosphates. This is Nucleoside triphosphate/diphosphate phosphatase from Streptococcus thermophilus (strain ATCC BAA-491 / LMD-9).